A 516-amino-acid chain; its full sequence is Putative sel1-like repeat-containing protein R850 (516 aa).

2 Sel1-like repeats span residues Ala103–Ser138 and Ser230–Asp265.

In Acanthamoeba polyphaga (Amoeba), this protein is Putative sel1-like repeat-containing protein R850.